The sequence spans 614 residues: Zinc metalloproteinase-disintegrin-like protein H4 subunit A (614 aa).

A signal peptide spans 1–20 (MIQPLLVVTCLVVFPYQVSS). Residues 21 to 193 (IILESGNVND…RKASQLVATS (173 aa)) constitute a propeptide that is removed on maturation. Glutamate 194 bears the Pyrrolidone carboxylic acid (Glu) mark. Residues 201-397 (KYIELVIVVD…IKSKCIDNKP (197 aa)) form the Peptidase M12B domain. An N-linked (GlcNAc...) asparagine glycan is attached at asparagine 220. 17 cysteine pairs are disulfide-bonded: cysteine 312/cysteine 392, cysteine 352/cysteine 376, cysteine 354/cysteine 359, cysteine 408/cysteine 437, cysteine 419/cysteine 432, cysteine 421/cysteine 427, cysteine 431/cysteine 454, cysteine 445/cysteine 451, cysteine 450/cysteine 476, cysteine 463/cysteine 483, cysteine 470/cysteine 502, cysteine 495/cysteine 507, cysteine 514/cysteine 564, cysteine 529/cysteine 575, cysteine 542/cysteine 552, cysteine 559/cysteine 601, and cysteine 595/cysteine 607. Histidine 337 lines the Zn(2+) pocket. The short motif at 337-348 (HELGHNLGMDHD) is the Metal-binding element. Glutamate 338 serves as the catalytic Proton acceptor. 2 residues coordinate Zn(2+): histidine 341 and histidine 347. The 87-residue stretch at 405–491 (PAFCGNYFVE…ECPTDVLQRN (87 aa)) folds into the Disintegrin domain. Ca(2+) contacts are provided by asparagine 410, phenylalanine 412, glutamate 414, glutamate 417, and aspartate 420. The N-linked (GlcNAc...) asparagine glycan is linked to asparagine 433. The short motif at 469–471 (ECD) is the D/ECD-tripeptide element. Ca(2+)-binding residues include aspartate 471 and aspartate 486.

Belongs to the venom metalloproteinase (M12B) family. P-III subfamily. Homodimer; disulfide-linked. Heterodimer of A and B subunits; disulfide-linked. Requires Zn(2+) as cofactor. In terms of processing, N-glycosylated. The N-terminus is blocked. As to expression, expressed by the venom gland (at protein level). Expressed by the venom gland.

It is found in the secreted. With respect to regulation, the proteolytic activity of the heterodimer of A and B subunits requires Zn(2+) and Ca(2+) ions. Functionally, heterodimer (A and B subunits): Zinc metalloprotease that has fibrinogenolytic and hemorrhagic activities. Cleaves insulin B chain preferably at '40-Tyr-|-Leu-41' bond, but also at '28-Gln-|-His-29' and '34-His-|-Leu-35' bonds. Hydrolyzes effectively isolated extracellular matrix (ECM) bovine fibronectin, and only slightly, basal membrane (BM) proteins human collagen IV and murine laminin, in vitro. Cleaves nidogen-1 (at '350-Ser-|-Phe-351' and '380-Tyr-|-Asn-381' bonds), but not laminin, in a solubilized BM preparation. Hydrolyzes plasma proteins involved in blood coagulation in vitro. It slightly shortens prothrombin time and significantly prolongs thrombin time. Has potent alpha-fibrinogenase activity cleaving human fibrinogen alpha chain at '441-Glu-|-Leu-442' and '539-Glu-|-Phe-540' bonds, and to a lesser extent, beta chain at '52-Lys-|-Arg-53' and '48-Pro-|-Leu-49' bonds, but does not cleave gamma chain. Hydrolyzes bovine prothrombin at '200-Ser-|-Gly-201' bond, but does not activate it, however, it cleaves fragment 1 and prethrombin 1 from it. Hydrolyzes bovine factor X heavy chain, but the cleavage does not produce an activated factor Xa heavy chain. No hydrolysis or activation of plasminogen. The ability to degrade some of the ECM, BM and plasma proteins is likely the main contributor to its hemorrhagic activity. Inhibits platelet aggregation induced by collagen in vitro. Its binding to glycosaminoglycans (GAGs) may assist in concentrating it in the proximity of blood vessel walls enabling in vivo degradation of BM protein components. Cytotoxic to cultured HeLa cancer cells in a concentration- and time-dependent manner. In the solubilized BM preparation (Matrigel), it induces morphological changes in the HeLa cells and inhibits their adhesion, however, the viability of the cells is not reduced. The protein is Zinc metalloproteinase-disintegrin-like protein H4 subunit A of Vipera ammodytes ammodytes (Western sand viper).